Here is a 286-residue protein sequence, read N- to C-terminus: Deleted in azoospermia-like (286 aa).

One can recognise an RRM domain in the interval 30 to 105 (NTVFVGGIDI…KKLKLGPAIR (76 aa)). The 26-residue stretch at 155 to 180 (ACPYPSSPPMAIQQIPVGCQQPSYFQ) folds into the DAZ domain.

The protein belongs to the RRM DAZ family. In terms of assembly, interacts with the C-terminus of pabp1 and with epabp. Prior to oocyte maturation, found in a complex with epabp and pum2 proteins and spdy1 mRNA; pum2 dissociates from the complex during maturation. In terms of tissue distribution, germ-line specific; expressed in adult testis and ovary. Localized specifically to the oocyte and embryonic germ plasm and to migrating primordial germ cells (PGCs).

The protein localises to the cytoplasm. Its function is as follows. RNA-binding protein that is required for primordial germ cell (PGC) differentiation and indirectly necessary for the migration of PGCs through the endoderm. May promote meiotic cell division during spermatogenesis. Shows a preference for G- and U-rich RNAs and probably binds the 3'-UTR of target mRNAs. Stimulates the initiation of translation of mRNAs through the recruitment of poly(A)-binding proteins (PABPs). This chain is Deleted in azoospermia-like, found in Xenopus tropicalis (Western clawed frog).